The chain runs to 174 residues: Ribosome maturation factor RimP (174 aa).

Belongs to the RimP family.

It is found in the cytoplasm. In terms of biological role, required for maturation of 30S ribosomal subunits. In Acinetobacter baumannii (strain SDF), this protein is Ribosome maturation factor RimP.